Here is a 1487-residue protein sequence, read N- to C-terminus: Protein cft1 (1487 aa).

Positions D486–G504 are enriched in acidic residues. The segment at D486 to A513 is disordered.

It belongs to the CFT1 family.

Its subcellular location is the nucleus. RNA-binding component of the cleavage and polyadenylation factor (CPF) complex, which plays a key role in polyadenylation-dependent pre-mRNA 3'-end formation and cooperates with cleavage factors including the CFIA complex and hrp1/CFIB. Involved in poly(A) site recognition. May be involved in coupling transcription termination and mRNA 3'-end formation. In Neurospora crassa (strain ATCC 24698 / 74-OR23-1A / CBS 708.71 / DSM 1257 / FGSC 987), this protein is Protein cft1 (paa-3).